The sequence spans 323 residues: DNA-directed RNA polymerase subunit alpha 1 (323 aa).

Positions Met1 to Arg228 are alpha N-terminal domain (alpha-NTD). The alpha C-terminal domain (alpha-CTD) stretch occupies residues Ile244–Lys323.

This sequence belongs to the RNA polymerase alpha chain family. As to quaternary structure, homodimer. The RNAP catalytic core consists of 2 alpha, 1 beta, 1 beta' and 1 omega subunit. When a sigma factor is associated with the core the holoenzyme is formed, which can initiate transcription.

The catalysed reaction is RNA(n) + a ribonucleoside 5'-triphosphate = RNA(n+1) + diphosphate. Its function is as follows. DNA-dependent RNA polymerase catalyzes the transcription of DNA into RNA using the four ribonucleoside triphosphates as substrates. This chain is DNA-directed RNA polymerase subunit alpha 1, found in Francisella tularensis subsp. tularensis (strain FSC 198).